Here is a 489-residue protein sequence, read N- to C-terminus: 2-(3-amino-3-carboxypropyl)histidine synthase subunit 2 (489 aa).

At Met-1 the chain carries N-acetylmethionine. Ser-7 carries the post-translational modification Phosphoserine. Residues Cys-89, Cys-110, and Cys-341 each coordinate [4Fe-4S] cluster. Phosphothreonine is present on Thr-435. Phosphoserine occurs at positions 446 and 456. The residue at position 467 (Thr-467) is a Phosphothreonine. Ser-488 is subject to Phosphoserine.

Belongs to the DPH1/DPH2 family. DPH2 subfamily. As to quaternary structure, component of the 2-(3-amino-3-carboxypropyl)histidine synthase complex composed of DPH1, DPH2, DPH3 and a NADH-dependent reductase. Interacts with DPH1. The cofactor is [4Fe-4S] cluster. Strongly expressed in skeletal muscle. Moderately expressed in heart, small intestine, liver, pancreas, testis and colon. Weakly expressed in brain, placenta, kidney, spleen, thymus, prostate, ovary and lymphocytes.

It functions in the pathway protein modification; peptidyl-diphthamide biosynthesis. Functionally, required for the first step of diphthamide biosynthesis, a post-translational modification of histidine which occurs in elongation factor 2. DPH1 and DPH2 transfer a 3-amino-3-carboxypropyl (ACP) group from S-adenosyl-L-methionine (SAM) to a histidine residue, the reaction is assisted by a reduction system comprising DPH3 and a NADH-dependent reductase. Facilitates the reduction of the catalytic iron-sulfur cluster found in the DPH1 subunit. This is 2-(3-amino-3-carboxypropyl)histidine synthase subunit 2 (DPH2) from Homo sapiens (Human).